We begin with the raw amino-acid sequence, 212 residues long: Pyridoxine/pyridoxamine 5'-phosphate oxidase (212 aa).

Substrate is bound by residues 8 to 11 and lysine 66; that span reads RRSY. Residues 61–66, 76–77, arginine 82, lysine 83, and glutamine 105 each bind FMN; these read RIVLLK and FT. Substrate contacts are provided by tyrosine 123, arginine 127, and serine 131. FMN is bound by residues 140–141 and tryptophan 184; that span reads QS. Position 190–192 (190–192) interacts with substrate; that stretch reads RLH. Arginine 194 contributes to the FMN binding site.

Belongs to the pyridoxamine 5'-phosphate oxidase family. Homodimer. Requires FMN as cofactor.

The enzyme catalyses pyridoxamine 5'-phosphate + O2 + H2O = pyridoxal 5'-phosphate + H2O2 + NH4(+). It carries out the reaction pyridoxine 5'-phosphate + O2 = pyridoxal 5'-phosphate + H2O2. It functions in the pathway cofactor metabolism; pyridoxal 5'-phosphate salvage; pyridoxal 5'-phosphate from pyridoxamine 5'-phosphate: step 1/1. Its pathway is cofactor metabolism; pyridoxal 5'-phosphate salvage; pyridoxal 5'-phosphate from pyridoxine 5'-phosphate: step 1/1. Functionally, catalyzes the oxidation of either pyridoxine 5'-phosphate (PNP) or pyridoxamine 5'-phosphate (PMP) into pyridoxal 5'-phosphate (PLP). The protein is Pyridoxine/pyridoxamine 5'-phosphate oxidase of Cupriavidus necator (strain ATCC 17699 / DSM 428 / KCTC 22496 / NCIMB 10442 / H16 / Stanier 337) (Ralstonia eutropha).